The sequence spans 424 residues: E3 ubiquitin-protein ligase RNF26 (424 aa).

Helical transmembrane passes span 24 to 44 (LNFLLVSSLLATLAWLLAFIY), 60 to 80 (GFLLSLLALVEAVVRFTFGGL), 157 to 177 (ISTQNFFSLVLALWDAVTGPL), 183 to 203 (VVAAFLAHISSSAVAMAILLW), and 224 to 244 (VVFHLTGLVLLACVLAVILIV). Residues 371 to 413 (CVICQDQSKTVLLLPCRHLCLCQACTEILMRHPVYHRNCPLCR) form an RING-type zinc finger.

In terms of assembly, interacts with INCA1. Interacts with TMEM43, ENDOD1, TMEM33 and TMED1 to form a complex capable of modulating innate immune signaling through the cGAS-STING pathway. Interacts with UBE2J1; this interaction is important for SQSTM1 ubiquitination.

It is found in the endoplasmic reticulum membrane. It carries out the reaction S-ubiquitinyl-[E2 ubiquitin-conjugating enzyme]-L-cysteine + [acceptor protein]-L-lysine = [E2 ubiquitin-conjugating enzyme]-L-cysteine + N(6)-ubiquitinyl-[acceptor protein]-L-lysine.. Its pathway is protein modification; protein ubiquitination. Functionally, E3 ubiquitin-protein ligase that plays a key role in endosome organization by retaining vesicles in the perinuclear cloud. Acts as a platform for perinuclear positioning of the endosomal system by mediating ubiquitination of SQSTM1 through interaction with the ubiquitin conjugating enzyme UBE2J1. Ubiquitinated SQSTM1 attracts specific vesicle-associated adapters, forming a molecular bridge that restrains cognate vesicles in the perinuclear region and organizes the endosomal pathway for efficient cargo transport. Also acts as a regulator of type I interferon production in response to viral infection by mediating the formation of 'Lys-11'-linked polyubiquitin chains on TMEM173/STING, leading to stabilize TMEM173/STING. Also required to limit type I interferon response by promoting autophagic degradation of IRF3. The chain is E3 ubiquitin-protein ligase RNF26 from Mus musculus (Mouse).